A 664-amino-acid polypeptide reads, in one-letter code: DNA ligase (664 aa).

Residues 32-36 (DKEYD) and 80-81 (SL) contribute to the NAD(+) site. The active-site N6-AMP-lysine intermediate is Lys-122. Residues Arg-144, Glu-178, and Lys-314 each coordinate NAD(+). Cys-407, Cys-410, Cys-423, and Cys-429 together coordinate Zn(2+). Positions 587-664 (IDENPFMDKT…NEEEFSNKIK (78 aa)) constitute a BRCT domain.

It belongs to the NAD-dependent DNA ligase family. LigA subfamily. Requires Mg(2+) as cofactor. Mn(2+) serves as cofactor.

It catalyses the reaction NAD(+) + (deoxyribonucleotide)n-3'-hydroxyl + 5'-phospho-(deoxyribonucleotide)m = (deoxyribonucleotide)n+m + AMP + beta-nicotinamide D-nucleotide.. DNA ligase that catalyzes the formation of phosphodiester linkages between 5'-phosphoryl and 3'-hydroxyl groups in double-stranded DNA using NAD as a coenzyme and as the energy source for the reaction. It is essential for DNA replication and repair of damaged DNA. In Clostridium botulinum (strain Langeland / NCTC 10281 / Type F), this protein is DNA ligase.